Here is a 2527-residue protein sequence, read N- to C-terminus: Neurogenic locus notch homolog protein 1 (2527 aa).

The first 36 residues, 1–36 (MGRSDSRAGALLEGGCEQNIDPRRAAHCHHPRLATS), serve as a signal peptide directing secretion. Topologically, residues 37-1741 (SLRCSQPSGT…VEPPLPSQLH (1705 aa)) are extracellular. Intrachain disulfides connect Cys40/Cys53, Cys47/Cys62, Cys64/Cys73, Cys79/Cys90, Cys84/Cys103, Cys105/Cys114, Cys122/Cys133, Cys127/Cys143, Cys145/Cys154, Cys160/Cys171, Cys165/Cys180, Cys182/Cys191, Cys198/Cys211, Cys205/Cys220, Cys222/Cys231, Cys238/Cys249, Cys243/Cys259, Cys261/Cys270, Cys277/Cys288, Cys282/Cys297, Cys299/Cys308, Cys315/Cys328, Cys322/Cys337, Cys339/Cys348, Cys355/Cys366, Cys360/Cys375, Cys377/Cys386, Cys392/Cys403, Cys397/Cys414, Cys416/Cys425, Cys432/Cys445, Cys439/Cys454, and Cys456/Cys465. The N-linked (GlcNAc...) asparagine glycan is linked to Asn57. EGF-like domains are found at residues 75–115 (DPNP…PLCL), 118–155 (LDNA…KSCQ), and 156–192 (QADP…PTCR). Ser81 carries an O-linked (Glc...) serine glycan. The O-linked (Fuc...) threonine glycan is linked to Thr89. Thr132 is a glycosylation site (O-linked (Fuc...) threonine). The O-linked (Glc...) serine glycan is linked to Ser162. The EGF-like 4; calcium-binding domain maps to 194–232 (DVNECSQNPGLCRHGGTCHNEIGSYRCVCRATHTGPHCE). Thr210 carries an O-linked (Fuc...) threonine glycan. One can recognise an EGF-like 5 domain in the interval 234-271 (PYVPCSPSPCQNGGTCRPTGDTTHECACLPGFAGQNCE). A glycan (O-linked (Fuc...) threonine; alternate) is linked at Thr248. Thr248 carries O-linked (GalNAc...) threonine; alternate glycosylation. The EGF-like 6; calcium-binding domain maps to 273-309 (NVDDCPGNNCKNGGACVDGVNTYNCRCPPEWTGQYCT). Positions 311–349 (DVDECQLMPNACQNGGTCHNTHGGYNCVCVNGWTGEDCS) constitute an EGF-like 7; calcium-binding domain. Thr327 is a glycosylation site (O-linked (Fuc...) threonine). The 37-residue stretch at 351 to 387 (NIDDCASAACFQGATCHDRVASFYCECPHGRTGLLCH) folds into the EGF-like 8; calcium-binding domain. The O-linked (Glc...) serine glycan is linked to Ser357. The O-linked (Fuc...) threonine glycan is linked to Thr365. An EGF-like 9 domain is found at 388–426 (LNDACISNPCNEGSNCDTNPVNGKAICTCPSGYTGPACS). Ser394 is a glycosylation site (O-linked (Glc...) serine). Residues 428-466 (DVDECALGANPCEHAGKCLNTLGSFECQCLQGYTGPRCE) form the EGF-like 10; calcium-binding domain. The interval 436–437 (AN) is interaction with DLL4. Residues Thr448 and Ser451 each contribute to the Ca(2+) site. Ser451 carries an O-linked (Glc...) serine glycan. Residues 464–468 (RCEID) are interaction with DLL4. Asp468, Val469, and Glu471 together coordinate Ca(2+). Residues 468 to 504 (DVNECISNPCQNDATCLDQIGEFQCICMPGYEGVYCE) form the EGF-like 11; calcium-binding domain. Disulfide bonds link Cys472/Cys483, Cys477/Cys492, and Cys494/Cys503. A glycan (O-linked (Glc...) serine) is linked at Ser474. Thr482 carries an O-linked (Fuc...) threonine glycan. Residues Asp485 and Gln486 each coordinate Ca(2+). Ca(2+)-binding residues include Asn506, Thr507, and Glu509. Residues 506–542 (NTDECASSPCLHNGHCMDKINEFLCQCPKGFSGHLCQ) form the EGF-like 12; calcium-binding domain. Intrachain disulfides connect Cys510–Cys521, Cys515–Cys530, Cys532–Cys541, Cys548–Cys559, Cys553–Cys568, Cys570–Cys579, Cys586–Cys596, Cys591–Cys605, Cys607–Cys616, Cys623–Cys634, Cys628–Cys643, Cys645–Cys654, Cys661–Cys671, Cys666–Cys680, Cys682–Cys691, Cys698–Cys709, Cys703–Cys718, Cys720–Cys729, Cys736–Cys746, Cys741–Cys755, Cys757–Cys766, Cys773–Cys784, Cys778–Cys793, Cys795–Cys804, Cys811–Cys822, Cys816–Cys831, Cys833–Cys842, and Cys849–Cys860. A glycan (O-linked (Glc...) serine) is linked at Ser512. Residues Asp523 and Lys524 each contribute to the Ca(2+) site. An EGF-like 13; calcium-binding domain is found at 544 to 580 (DVDECASTPCKNGAKCLDGPNTYTCVCTEGYTGTHCE). A glycan (O-linked (Glc...) serine) is linked at Ser550. Positions 582–617 (DIDECDPDPCHYGFCKDGVATFTCLCQPGYTGHHCE) constitute an EGF-like 14; calcium-binding domain. Residues 619 to 655 (NINECHSQPCRHGGTCQDRDNSYLCLCLKGTTGPNCE) enclose the EGF-like 15; calcium-binding domain. A glycan (O-linked (Glc...) serine) is linked at Ser625. O-linked (Fuc...) threonine glycosylation occurs at Thr633. One can recognise an EGF-like 16; calcium-binding domain in the interval 657–692 (NLDDCASNPCDSGTCLDKIDGYECACEPGYTGSMCN). Ser663 is a glycosylation site (O-linked (Glc...) serine). An EGF-like 17; calcium-binding domain is found at 694 to 730 (NIDECAGSPCHNGGTCEDGIAGFTCRCPEGYHDPTCL). A glycan (O-linked (Fuc...) threonine) is linked at Thr708. One can recognise an EGF-like 18; calcium-binding domain in the interval 732–767 (EVNECNSNPCIHGACRDGLNGYKCDCAPGWSGTNCD). A glycan (O-linked (Glc...) serine) is linked at Ser738. In terms of domain architecture, EGF-like 19 spans 769 to 805 (NNNECESNPCVNGGTCKDMTSGYVCTCREGFSGPNCQ). Ser775 carries an O-linked (Glc...) serine glycan. O-linked (Fuc...) threonine glycosylation is present at Thr783. A glycan (O-linked (GlcNAc) serine) is linked at Ser800. One can recognise an EGF-like 20; calcium-binding domain in the interval 807 to 843 (NINECASNPCLNQGTCIDDVAGYKCNCPLPYTGATCE). The O-linked (Glc...) serine glycan is linked to Ser813. Thr821 is a glycosylation site (O-linked (Fuc...) threonine). The 39-residue stretch at 845–883 (VLAPCATSPCKNSGVCKESEDYESFSCVCPTGWQGQTCE) folds into the EGF-like 21 domain. The EGF-like 22; calcium-binding domain occupies 885–921 (DINECVKSPCRHGASCQNTNGSYRCLCQAGYTGRNCE). Asn904 carries N-linked (GlcNAc...) asparagine glycosylation. Thr916 carries O-linked (GlcNAc) threonine glycosylation. The EGF-like 23 domain maps to 923–959 (DIDDCRPNPCHNGGSCTDGINMAFCDCLPGFQGAFCE). Ser937 carries O-linked (Fuc) serine glycosylation. An EGF-like 24; calcium-binding domain is found at 961–997 (DINECASNPCRNGANCTDCVDSYTCTCPAGFNGIHCE). Residue Ser967 is glycosylated (O-linked (Glc...) serine). Asn975 carries N-linked (GlcNAc...) asparagine glycosylation. EGF-like domains follow at residues 999-1035 (NTPD…SYCQ), 1037-1073 (DVNE…LNCQ), 1075-1111 (LVHW…FNCD), 1113-1159 (LSVS…SYCE), and 1161-1197 (EVDE…SNCS). O-linked (Fuc...) threonine glycosylation occurs at Thr1013. O-linked (Glc...) serine glycosylation occurs at Ser1043. An O-linked (Fuc...) threonine glycan is attached at Thr1051. Ser1081 carries an O-linked (Glc...) serine glycan. A disulfide bond links Cys1117 and Cys1138. A glycan (O-linked (Fuc...) threonine) is linked at Thr1175. N-linked (GlcNAc...) asparagine glycosylation is present at Asn1195. The EGF-like 30; calcium-binding domain occupies 1199–1235 (EINECLSQPCQNGGTCIDLTNTYKCSCPRGTQGVHCE). O-linked (Glc...) serine glycosylation occurs at Ser1205. O-linked (Fuc...) threonine glycosylation is present at Thr1213. Residues 1237-1281 (NVDDCHPHLDPASRSPKCFNNGTCVDQVGGYSCTCPPGFVGERCE) enclose the EGF-like 31; calcium-binding domain. Asn1257 carries an N-linked (GlcNAc...) asparagine glycan. EGF-like domains are found at residues 1283-1321 (DINE…RRCE), 1323-1362 (VING…ATCE), 1364-1400 (DART…PECQ), and 1403-1442 (ASSP…LLCH). The O-linked (Glc...) serine glycan is linked to Ser1289. Thr1378 carries an O-linked (Fuc...) threonine glycan. An O-linked (GlcNAc...) threonine glycan is attached at Thr1395. An O-linked (Fuc...) threonine; alternate glycan is attached at Thr1418. Residue Thr1418 is glycosylated (O-linked (GalNAc...) threonine; alternate). LNR repeat units follow at residues 1465 to 1505 (CELP…PWKN), 1506 to 1547 (CTQS…CNPL), and 1548 to 1587 (YDQY…RLAA). Ca(2+) contacts are provided by Asp1473, Asn1476, Asp1491, and Asp1494. Residue Asn1505 is glycosylated (N-linked (GlcNAc...) asparagine). Residue Asn1603 is glycosylated (N-linked (GlcNAc...) asparagine). O-linked (GalNAc...) threonine glycosylation is present at Thr1731. An interaction with PSEN1 region spans residues 1734–1766 (PPLPSQLHLMYLAAAAFVLLFFVGCGVLLSRKR). Residues 1742-1762 (LMYLAAAAFVLLFFVGCGVLL) form a helical membrane-spanning segment. Residues 1763 to 2527 (SRKRRRQHGQ…QITHIPEAFK (765 aa)) are Cytoplasmic-facing. Lys1765 is covalently cross-linked (Glycyl lysine isopeptide (Lys-Gly) (interchain with G-Cter in ubiquitin)). The disordered stretch occupies residues 1786–1814 (KKKRREPLGEDSVGLKPLKNASDGALMDD). Thr1867 bears the Phosphothreonine mark. 5 ANK repeats span residues 1933-1962 (TGET…DANI), 1966-1996 (MGRT…DLDA), 2000-2029 (DGTT…DVNA), 2033-2062 (LGKS…NKDM), and 2066-2095 (KEET…NRDI). The HIF1AN-binding stretch occupies residues 1953-1961 (LLEASADAN). Asn1961 bears the (3S)-3-hydroxyasparagine; by HIF1AN; partial mark. The tract at residues 2020–2028 (LINSHADVN) is HIF1AN-binding. Asn2028 is modified ((3S)-3-hydroxyasparagine; by HIF1AN). Disordered stretches follow at residues 2157-2201 (SATQ…DSSS), 2378-2424 (QPQN…SLPV), and 2436-2527 (PTSL…EAFK). The segment covering 2378–2391 (QPQNLQPPSQPHLS) has biased composition (low complexity). A compositionally biased stretch (polar residues) spans 2436–2474 (PTSLPSSMVPPMTTTQFLTPPSQHSYSSSPVDNTPSHQL). The segment covering 2484-2499 (PSPESPDQWSSSSPHS) has biased composition (low complexity). Over residues 2500–2520 (NISDWSEGISSPPTSMPSQIT) the composition is skewed to polar residues.

This sequence belongs to the NOTCH family. In terms of assembly, heterodimer of a C-terminal fragment N(TM) and an N-terminal fragment N(EC) which are probably linked by disulfide bonds. Interacts with DNER, DTX1, DTX2 and RBPJ/RBPSUH. Also interacts with MAML1, MAML2 and MAML3 which act as transcriptional coactivators for NOTCH1. Notch 1 intracellular domain interacts with SNW1; the interaction involves multimerized NOTCH1 NICD and is implicated in a formation of an intermediate preactivation complex which associates with DNA-bound CBF-1/RBPJ. The activated membrane-bound form interacts with AAK1 which promotes NOTCH1 stabilization. Forms a trimeric complex with FBXW7 and SGK1. Interacts with HIF1AN. HIF1AN negatively regulates the function of notch intracellular domain (NICD), accelerating myogenic differentiation. Interacts (via NICD) with SNAI1 (via zinc fingers); the interaction induces SNAI1 degradation via MDM2-mediated ubiquitination and inhibits SNAI1-induced cell invasion. Interacts (via NICD) with MDM2A. Interacts (via NICD) with BCL6; the interaction decreases MAML1 recruitment by NOTCH1 NICD on target genes DNA and inhibits NOTCH1 transactivation activity. Interacts with THBS4. Interacts (via the EGF-like repeat region) with CCN3 (via CTCK domain). Interacts (via EGF-like domains) with DLL4 (via N-terminal DSL and MNNL domains). Interacts with ZMIZ1. Interacts (via NICD domain) with MEGF10 (via the cytoplasmic domain). Interacts with DLL1 and JAG1. Interacts (via NICD domain) with PRAG1. Forms a complex with PRAG1, N1ICD and MAML1, in a MAML1-dependent manner. Interacts (via transmembrane region) with PSEN1; the interaction is direct. Interacts with ZFP64. Synthesized in the endoplasmic reticulum as an inactive form which is proteolytically cleaved by a furin-like convertase in the trans-Golgi network before it reaches the plasma membrane to yield an active, ligand-accessible form. Cleavage results in a C-terminal fragment N(TM) and a N-terminal fragment N(EC). Following ligand binding, it is cleaved by ADAM17 to yield a membrane-associated intermediate fragment called notch extracellular truncation (NEXT). Following endocytosis, this fragment is then cleaved by one of the catalytic subunits of gamma-secretase (PSEN1 or PSEN2) to release a Notch-derived peptide containing the intracellular domain (NICD) from the membrane. Post-translationally, phosphorylated. In terms of processing, O-linked glycosylation by GALNT11 is involved in determination of left/right symmetry: glycosylation promotes activation of NOTCH1, possibly by promoting cleavage by ADAM17, modulating the balance between motile and immotile (sensory) cilia at the left-right organiser (LRO). O-glycosylated on the EGF-like domains. O-glucosylated at Ser-451 by KDELC1 and KDELC2. Contains both O-linked fucose and O-linked glucose in the EGF-like domains 11, 12 and 13, which are interacting with the residues on DLL4. MFNG-, RFNG- and LFNG-mediated modification of O-fucose residues at specific EGF-like domains results in inhibition of its activation by JAG1 and enhancement of its activation by DLL1 via an increased binding to DLL1. Ubiquitinated. Undergoes 'Lys-29'-linked polyubiquitination by ITCH; promotes the lysosomal degradation of non-activated internalized NOTCH1. Deubiquitination by USP12 is required for transport of internalized non-activated receptor from late endosomes to lysosomes for degradation. Monoubiquitination at Lys-1765 is required for activation by gamma-secretase cleavage, it promotes interaction with AAK1, which stabilizes it. Deubiquitination by EIF3F is necessary for nuclear import of activated Notch. Post-translationally, hydroxylated at Asn-1961 by HIF1AN. Hydroxylated at Asn-2028 by HIF1AN. Hydroxylation reduces affinity for HI1AN and may thus indirectly modulate negative regulation of NICD.

It is found in the cell membrane. Its subcellular location is the late endosome membrane. The protein localises to the nucleus. Functionally, functions as a receptor for membrane-bound ligands Jagged-1 (JAG1), Jagged-2 (JAG2) and Delta-1 (DLL1) to regulate cell-fate determination. Upon ligand activation through the released notch intracellular domain (NICD) it forms a transcriptional activator complex with RBPJ/RBPSUH and activates genes of the enhancer of split locus. Affects the implementation of differentiation, proliferation and apoptotic programs. Involved in angiogenesis; negatively regulates endothelial cell proliferation and migration and angiogenic sprouting. Involved in the maturation of both CD4(+) and CD8(+) cells in the thymus. Important for follicular differentiation and possibly cell fate selection within the follicle. During cerebellar development, functions as a receptor for neuronal DNER and is involved in the differentiation of Bergmann glia. Represses neuronal and myogenic differentiation. May play an essential role in postimplantation development, probably in some aspect of cell specification and/or differentiation. May be involved in mesoderm development, somite formation and neurogenesis. May enhance HIF1A function by sequestering HIF1AN away from HIF1A. Required for the THBS4 function in regulating protective astrogenesis from the subventricular zone (SVZ) niche after injury. Involved in determination of left/right symmetry by modulating the balance between motile and immotile (sensory) cilia at the left-right organiser (LRO). The chain is Neurogenic locus notch homolog protein 1 (NOTCH1) from Cricetulus griseus (Chinese hamster).